The following is a 446-amino-acid chain: Argininosuccinate lyase (446 aa).

This sequence belongs to the lyase 1 family. Argininosuccinate lyase subfamily.

It localises to the cytoplasm. It carries out the reaction 2-(N(omega)-L-arginino)succinate = fumarate + L-arginine. It functions in the pathway amino-acid biosynthesis; L-arginine biosynthesis; L-arginine from L-ornithine and carbamoyl phosphate: step 3/3. The sequence is that of Argininosuccinate lyase from Parabacteroides distasonis (strain ATCC 8503 / DSM 20701 / CIP 104284 / JCM 5825 / NCTC 11152).